Reading from the N-terminus, the 239-residue chain is 1-(5-phosphoribosyl)-5-[(5-phosphoribosylamino)methylideneamino] imidazole-4-carboxamide isomerase (239 aa).

The active-site Proton acceptor is the Asp-8. The active-site Proton donor is Asp-129.

Belongs to the HisA/HisF family.

The protein resides in the cytoplasm. The enzyme catalyses 1-(5-phospho-beta-D-ribosyl)-5-[(5-phospho-beta-D-ribosylamino)methylideneamino]imidazole-4-carboxamide = 5-[(5-phospho-1-deoxy-D-ribulos-1-ylimino)methylamino]-1-(5-phospho-beta-D-ribosyl)imidazole-4-carboxamide. It functions in the pathway amino-acid biosynthesis; L-histidine biosynthesis; L-histidine from 5-phospho-alpha-D-ribose 1-diphosphate: step 4/9. The sequence is that of 1-(5-phosphoribosyl)-5-[(5-phosphoribosylamino)methylideneamino] imidazole-4-carboxamide isomerase from Bacillus cytotoxicus (strain DSM 22905 / CIP 110041 / 391-98 / NVH 391-98).